The primary structure comprises 103 residues: MHVKKGDKVQVISGKDKGKQGVILAAFPKKNRVIVEGVNIVKKHAKPSQANPQGGIIEKEAPIHVSKVMPLDPKTGEPTRIGYKIVDGKKVRYAKKSGEILDK.

This sequence belongs to the universal ribosomal protein uL24 family. Part of the 50S ribosomal subunit.

One of two assembly initiator proteins, it binds directly to the 5'-end of the 23S rRNA, where it nucleates assembly of the 50S subunit. Its function is as follows. One of the proteins that surrounds the polypeptide exit tunnel on the outside of the subunit. The chain is Large ribosomal subunit protein uL24 from Geobacillus stearothermophilus (Bacillus stearothermophilus).